We begin with the raw amino-acid sequence, 163 residues long: Large ribosomal subunit protein bL19 (163 aa).

Basic and acidic residues predominate over residues 131–150; the sequence is ISQERKASGKDQASKPEVRP. The tract at residues 131-163 is disordered; the sequence is ISQERKASGKDQASKPEVRPQGKKPAPKPKAKK. A compositionally biased stretch (basic residues) spans 151-163; sequence QGKKPAPKPKAKK.

Belongs to the bacterial ribosomal protein bL19 family.

Functionally, this protein is located at the 30S-50S ribosomal subunit interface and may play a role in the structure and function of the aminoacyl-tRNA binding site. This is Large ribosomal subunit protein bL19 from Rhodospirillum rubrum (strain ATCC 11170 / ATH 1.1.1 / DSM 467 / LMG 4362 / NCIMB 8255 / S1).